A 551-amino-acid chain; its full sequence is Trigger factor (551 aa).

The 86-residue stretch at 165-250 (GDLVVLDFAG…ATDVRVPGET (86 aa)) folds into the PPIase FKBP-type domain. Residues 442 to 551 (ADDDTIGKGH…APAKKKAAAE (110 aa)) form a disordered region. The span at 458 to 472 (GHDHHDHDHDHDHAA) shows a compositional bias: basic and acidic residues. Low complexity predominate over residues 513–541 (EAAPAPKKAPAKKAAAAKAEEAPAAAPKK). Over residues 542-551 (APAKKKAAAE) the composition is skewed to basic residues.

The protein belongs to the FKBP-type PPIase family. Tig subfamily.

The protein resides in the cytoplasm. The enzyme catalyses [protein]-peptidylproline (omega=180) = [protein]-peptidylproline (omega=0). Functionally, involved in protein export. Acts as a chaperone by maintaining the newly synthesized protein in an open conformation. Functions as a peptidyl-prolyl cis-trans isomerase. In Rhizorhabdus wittichii (strain DSM 6014 / CCUG 31198 / JCM 15750 / NBRC 105917 / EY 4224 / RW1) (Sphingomonas wittichii), this protein is Trigger factor.